The following is a 361-amino-acid chain: Serpentine receptor class X 45 (361 aa).

A run of 7 helical transmembrane segments spans residues 20–40 (LLIF…AFYI), 58–78 (AAGD…VLFF), 92–112 (FAQL…VISL), 133–153 (TTFL…FLVI), 176–196 (MINV…MFAI), 242–262 (LLYV…PVPL), and 278–298 (LLTT…TLIF). A glycan (N-linked (GlcNAc...) asparagine) is linked at N317.

This sequence belongs to the G-protein coupled receptor 1 family.

It is found in the cell membrane. The chain is Serpentine receptor class X 45 (srx-45) from Caenorhabditis elegans.